A 227-amino-acid polypeptide reads, in one-letter code: Uracil-DNA glycosylase 2 (227 aa).

Residue D67 is the Proton acceptor of the active site.

Belongs to the uracil-DNA glycosylase (UDG) superfamily. UNG family.

The protein resides in the cytoplasm. It catalyses the reaction Hydrolyzes single-stranded DNA or mismatched double-stranded DNA and polynucleotides, releasing free uracil.. In terms of biological role, excises uracil residues from the DNA which can arise as a result of misincorporation of dUMP residues by DNA polymerase or due to deamination of cytosine. The sequence is that of Uracil-DNA glycosylase 2 (ung2) from Streptomyces coelicolor (strain ATCC BAA-471 / A3(2) / M145).